Reading from the N-terminus, the 278-residue chain is Formamidopyrimidine-DNA glycosylase (278 aa).

The Schiff-base intermediate with DNA role is filled by proline 2. Residue glutamate 3 is the Proton donor of the active site. Lysine 59 functions as the Proton donor; for beta-elimination activity in the catalytic mechanism. Residues histidine 94, arginine 113, and lysine 154 each coordinate DNA. The segment at 239–273 adopts an FPG-type zinc-finger fold; the sequence is KVHTKKGEFCIKCSSKIEKIKFKGRGTYFCPTCQK. Arginine 263 acts as the Proton donor; for delta-elimination activity in catalysis.

It belongs to the FPG family. In terms of assembly, monomer. Zn(2+) is required as a cofactor.

It catalyses the reaction Hydrolysis of DNA containing ring-opened 7-methylguanine residues, releasing 2,6-diamino-4-hydroxy-5-(N-methyl)formamidopyrimidine.. The enzyme catalyses 2'-deoxyribonucleotide-(2'-deoxyribose 5'-phosphate)-2'-deoxyribonucleotide-DNA = a 3'-end 2'-deoxyribonucleotide-(2,3-dehydro-2,3-deoxyribose 5'-phosphate)-DNA + a 5'-end 5'-phospho-2'-deoxyribonucleoside-DNA + H(+). In terms of biological role, involved in base excision repair of DNA damaged by oxidation or by mutagenic agents. Acts as a DNA glycosylase that recognizes and removes damaged bases. Has a preference for oxidized purines, such as 7,8-dihydro-8-oxoguanine (8-oxoG). Has AP (apurinic/apyrimidinic) lyase activity and introduces nicks in the DNA strand. Cleaves the DNA backbone by beta-delta elimination to generate a single-strand break at the site of the removed base with both 3'- and 5'-phosphates. The protein is Formamidopyrimidine-DNA glycosylase (mutM) of Mycoplasmopsis pulmonis (strain UAB CTIP) (Mycoplasma pulmonis).